The sequence spans 762 residues: 5-methyltetrahydropteroyltriglutamate--homocysteine methyltransferase (762 aa).

5-methyltetrahydropteroyltri-L-glutamate is bound by residues 17–20 (REWK) and Lys111. Residues 435–437 (IGS) and Glu488 each bind L-homocysteine. L-methionine-binding positions include 435 to 437 (IGS) and Glu488. Residues 519–520 (RC) and Trp565 each bind 5-methyltetrahydropteroyltri-L-glutamate. L-homocysteine is bound at residue Asp603. An L-methionine-binding site is contributed by Asp603. Glu609 is a 5-methyltetrahydropteroyltri-L-glutamate binding site. Zn(2+) is bound by residues His645, Cys647, and Glu669. His698 acts as the Proton donor in catalysis. Cys730 contacts Zn(2+).

It belongs to the vitamin-B12 independent methionine synthase family. It depends on Zn(2+) as a cofactor.

It catalyses the reaction 5-methyltetrahydropteroyltri-L-glutamate + L-homocysteine = tetrahydropteroyltri-L-glutamate + L-methionine. Its pathway is amino-acid biosynthesis; L-methionine biosynthesis via de novo pathway; L-methionine from L-homocysteine (MetE route): step 1/1. Functionally, catalyzes the transfer of a methyl group from 5-methyltetrahydrofolate to homocysteine resulting in methionine formation. This is 5-methyltetrahydropteroyltriglutamate--homocysteine methyltransferase from Bacillus mycoides (strain KBAB4) (Bacillus weihenstephanensis).